The primary structure comprises 153 residues: Superoxide dismutase [Cu-Zn] (153 aa).

H45, H47, and H62 together coordinate Cu cation. The cysteines at positions 56 and 145 are disulfide-linked. Residues H62, H70, H79, and D82 each coordinate Zn(2+). Residue H119 participates in Cu cation binding.

It belongs to the Cu-Zn superoxide dismutase family. In terms of assembly, homodimer. The cofactor is Cu cation. Zn(2+) is required as a cofactor.

Its subcellular location is the cytoplasm. The enzyme catalyses 2 superoxide + 2 H(+) = H2O2 + O2. Its function is as follows. Destroys radicals which are normally produced within the cells and which are toxic to biological systems. This Drosophila teissieri (Fruit fly) protein is Superoxide dismutase [Cu-Zn].